The sequence spans 343 residues: Heat-inducible transcription repressor HrcA (343 aa).

It belongs to the HrcA family.

Its function is as follows. Negative regulator of class I heat shock genes (grpE-dnaK-dnaJ and groELS operons). Prevents heat-shock induction of these operons. The chain is Heat-inducible transcription repressor HrcA from Mycobacterium marinum (strain ATCC BAA-535 / M).